The primary structure comprises 786 residues: Neprilysin-3 (786 aa).

The Cytoplasmic segment spans residues 1 to 52; it reads MTRYKQTEFTEDDSSSIGGIQLNEATGHTGMQIRYHTARATWNWRSRNKTEK. Residues 53–73 form a helical; Signal-anchor for type II membrane protein membrane-spanning segment; the sequence is WLLITTFVMAITIFTLLIVLF. At 74-786 the chain is on the extracellular side; that stretch reads TDGGSSDATK…MNPTEKCEVW (713 aa). A Peptidase M13 domain is found at 102 to 786; the sequence is PCLNKHCIFA…MNPTEKCEVW (685 aa). 5 disulfides stabilise this stretch: cysteine 103-cysteine 108, cysteine 126-cysteine 771, cysteine 134-cysteine 731, cysteine 190-cysteine 450, and cysteine 659-cysteine 783. Residues asparagine 216, asparagine 226, asparagine 256, asparagine 279, asparagine 305, asparagine 325, asparagine 356, asparagine 388, asparagine 496, and asparagine 569 are each glycosylated (N-linked (GlcNAc...) asparagine). Position 622 (histidine 622) interacts with Zn(2+). Residue glutamate 623 is part of the active site. Residues histidine 626 and glutamate 682 each contribute to the Zn(2+) site. The Proton donor role is filled by aspartate 686. N-linked (GlcNAc...) asparagine glycosylation occurs at asparagine 715.

Belongs to the peptidase M13 family. It depends on Zn(2+) as a cofactor.

The protein localises to the cell membrane. The catalysed reaction is Preferential cleavage of polypeptides between hydrophobic residues, particularly with Phe or Tyr at P1'.. Its function is as follows. Metalloendoprotease which is required in the dorsal paired medial neurons for the proper formation of long-term (LTM) and middle-term memories (MTM). Also required in the mushroom body neurons where it functions redundantly with neprilysins Nep2 and Nep4 in normal LTM formation. The chain is Neprilysin-3 from Drosophila melanogaster (Fruit fly).